We begin with the raw amino-acid sequence, 292 residues long: Probable 2-(5''-triphosphoribosyl)-3'-dephosphocoenzyme-A synthase (292 aa).

The protein belongs to the CitG/MdcB family.

The catalysed reaction is 3'-dephospho-CoA + ATP = 2'-(5''-triphospho-alpha-D-ribosyl)-3'-dephospho-CoA + adenine. Its function is as follows. Involved in the formation of 2-(5''-phosphoribosyl)-3'-dephosphocoenzyme-A, the prosthetic group of the acyl-carrier protein of the malonate decarboxylase. This Azotobacter vinelandii (strain DJ / ATCC BAA-1303) protein is Probable 2-(5''-triphosphoribosyl)-3'-dephosphocoenzyme-A synthase.